A 205-amino-acid polypeptide reads, in one-letter code: Glycerol-3-phosphate acyltransferase (205 aa).

6 helical membrane passes run 5–25, 54–74, 87–107, 117–137, 138–158, and 162–182; these read LALG…GYLA, GPAA…VWLA, IVLG…WLAF, VGLL…VWGV, CFAV…ATPL, and LWRA…YIVW.

Belongs to the PlsY family. Probably interacts with PlsX.

The protein resides in the cell inner membrane. The catalysed reaction is an acyl phosphate + sn-glycerol 3-phosphate = a 1-acyl-sn-glycero-3-phosphate + phosphate. Its pathway is lipid metabolism; phospholipid metabolism. Catalyzes the transfer of an acyl group from acyl-phosphate (acyl-PO(4)) to glycerol-3-phosphate (G3P) to form lysophosphatidic acid (LPA). This enzyme utilizes acyl-phosphate as fatty acyl donor, but not acyl-CoA or acyl-ACP. The sequence is that of Glycerol-3-phosphate acyltransferase from Gloeobacter violaceus (strain ATCC 29082 / PCC 7421).